The following is a 472-amino-acid chain: Karilysin (472 aa).

The N-terminal stretch at 1–20 is a signal peptide; that stretch reads MKRFILLFFLSTIAIFKVYS. Positions 21-34 are cleaved as a propeptide — activation peptide; it reads QRLYDNGPLTGDNN. 5 residues coordinate Zn(2+): His-102, Asp-104, His-117, His-133, and His-155. Glu-156 serves as the catalytic Proton donor/acceptor. His-159 and His-165 together coordinate Zn(2+). Residues 196–386 constitute a propeptide, removed in short form; the sequence is YGYPFSISGP…AVSCSRTISP (191 aa). The propeptide at 387–472 is removed in long form; the sequence is FTLSPNPATD…QTYTQKLIKK (86 aa).

The protein belongs to the peptidase M10A family. The cofactor is Zn(2+). Post-translationally, processes itself into the mature 18-kDa enzyme (Kly18) through sequential autoproteolytic cleavage at both the N- and C-termini. However, the maturation intermediate Kly38 is found to be more active than Kly18 and the rate for its processing is slow, which raises the question as to whether Kly38 is a physiologically relevant entity.

It is found in the secreted. Its activity is regulated as follows. Autoprocessing and proteolytic activity are completely inhibited by EDTA and 1,10-phenanthroline in vitro. Proteolytic activity is 3-fold enhanced by Ca(2+) due to stabilization of the protein structure but inhibited by an excess of Zn(2+). Inhibitory studies of karilysin identified several phage display-selected peptides with apparent inhibition constants (Ki) in the micromolar range, among which is the tetrapeptide SWFP (Ki=10.7 uM). Functionally, metalloprotease able to cleave casein, gelatin, elastin, fibrinogen and fibronectin. Shows exclusive preference for hydrophobic residues, especially Leu, Tyr and Met, at the P1' position of substrates, and for Pro or Ala at P3. Can efficiently cleave the antimicrobial peptide LL-37 which is a component of the immune system, leading to a significant reduction of its bactericidal activity. Is also able to inhibit all pathways of the human complement system. The classical and lectin complement pathways are inhibited because of the efficient degradation of mannose-binding lectin, ficolin-2, ficolin-3, and C4 by karilysin, whereas inhibition of the terminal pathway is caused by cleavage of C5. Thus, karilysin appears to be a major virulence factor of T.forsythia that contributes to evasion of the human immune response and periodontal disease. Seems to act synergistically with gingipains from the periodontal pathogen P.gingivalis present at the same sites of infection. This is Karilysin (kly) from Tannerella forsythia (strain ATCC 43037 / JCM 10827 / CCUG 21028 A / KCTC 5666 / FDC 338) (Bacteroides forsythus).